The chain runs to 610 residues: ESX-5 secretion system protein EccA5 (610 aa).

Residue 357–364 (GPPGTGKT) coordinates ATP.

Belongs to the CbxX/CfxQ family. As to quaternary structure, part of the ESX-5 / type VII secretion system (T7SS), which is composed of cytosolic and membrane components.

The protein localises to the cytoplasm. Functionally, part of an ESX-5 / type VII specialized secretion system (T7SS), which exports several proteins. EccA5 exhibits ATPase activity and may provide energy for the export of ESX-5 substrates. This chain is ESX-5 secretion system protein EccA5, found in Mycobacterium bovis (strain ATCC BAA-935 / AF2122/97).